We begin with the raw amino-acid sequence, 494 residues long: MNDAAPQNPGQDEAKGTGEKDNGGSMSPRSALRTTAGVAGAGLGLSALGTGTASASVPEAAQTAVPAAESDESAAPKRQGRTMAGVPFERRSTVRVGIIGLGNRGGSMIDLFLAVPGVRVVALCDTVRDKAASAAAKVVKAGQPAPAVYTKDEHDYEQLCARGDVDFVYVATPWDFHFEMAKTAMLNGKHVGVECPVAMRLDELWKLVDLSERTRRHCMQLENCAYGKNEMRVLRMAHAGLFGDLLHGAGAYNHDLRGLMFDPDYYEGPWRRLWHTRLRGDLYPNHGFGPVANYLDINRGDRAVSITSMGTPALGLAQYREENMPPGDASWKETYVSSDRTISLVQTAKGRVVRLEHDVSTPHPYSRINSLGGTRGVFEDYPERIYIEPDHANDEWGDFAAYADWDHWLWKEHANPPGGHGGMDYIMVFRLMQCVRLGLVPDFDVYDAATWTAPVPLSHASIKANGKPQQIPDFTRGEWKKSRPGTDSEKPSEP.

Disordered stretches follow at residues 1–35 (MNDA…LRTT) and 59–86 (EAAQ…MAGV). The segment at residues 1–55 (MNDAAPQNPGQDEAKGTGEKDNGGSMSPRSALRTTAGVAGAGLGLSALGTGTASA) is a signal peptide (tat-type signal). The segment covering 12–22 (DEAKGTGEKDN) has biased composition (basic and acidic residues). NAD(+) is bound by residues 103-104 (NR), aspartate 125, 174-177 (WDFH), 194-195 (EC), and asparagine 223. Residues tyrosine 252, arginine 271, 283–286 (YPNH), and tyrosine 365 each bind substrate. Tyrosine 283 is an NAD(+) binding site. Residues 463-494 (KANGKPQQIPDFTRGEWKKSRPGTDSEKPSEP) are disordered. Residues 475–494 (TRGEWKKSRPGTDSEKPSEP) show a composition bias toward basic and acidic residues.

It belongs to the Gfo/Idh/MocA family. Glycosyl hydrolase 109 subfamily. NAD(+) serves as cofactor. Predicted to be exported by the Tat system. The position of the signal peptide cleavage has not been experimentally proven.

Functionally, glycosidase. The protein is Glycosyl hydrolase family 109 protein of Streptomyces niveus (Streptomyces spheroides).